Here is a 422-residue protein sequence, read N- to C-terminus: Histidine--tRNA ligase (422 aa).

Belongs to the class-II aminoacyl-tRNA synthetase family. In terms of assembly, homodimer.

It is found in the cytoplasm. It catalyses the reaction tRNA(His) + L-histidine + ATP = L-histidyl-tRNA(His) + AMP + diphosphate + H(+). The protein is Histidine--tRNA ligase of Vibrio cholerae serotype O1 (strain ATCC 39541 / Classical Ogawa 395 / O395).